Here is a 274-residue protein sequence, read N- to C-terminus: MEALRQRIEAAFETRQDISPSSVEPSVRADVETVINMLDKGQARVAEKIDGEWHVHQWLKKAVLLSFRIFDNGVIEGGDTKYFDKVPQKFADYDEARFKAEGIRVVPPATVRKGSFIGKNTVLMPSYVNLGAYVDEGTMVDTWATVGSCAQIGKNVHLSGGVGIGGVLEPLQAGPTIIEDNCFIGARSEIVEGVVVEEGSVISMGVYIGQSTRIFDRETGEVHYGRVPAGSVVVSGNLPSACGTYSLYAAIIVKKVDAKTRGKVGINELLRIVD.

2 residues coordinate substrate: R104 and D141.

This sequence belongs to the transferase hexapeptide repeat family. As to quaternary structure, homotrimer.

It is found in the cytoplasm. It catalyses the reaction (S)-2,3,4,5-tetrahydrodipicolinate + succinyl-CoA + H2O = (S)-2-succinylamino-6-oxoheptanedioate + CoA. The protein operates within amino-acid biosynthesis; L-lysine biosynthesis via DAP pathway; LL-2,6-diaminopimelate from (S)-tetrahydrodipicolinate (succinylase route): step 1/3. The polypeptide is 2,3,4,5-tetrahydropyridine-2,6-dicarboxylate N-succinyltransferase (Shewanella frigidimarina (strain NCIMB 400)).